Consider the following 832-residue polypeptide: Protein translocase subunit SecA (832 aa).

Residues Gln87, 105 to 109 (GEGKT), and Asp512 each bind ATP.

Belongs to the SecA family. Monomer and homodimer. Part of the essential Sec protein translocation apparatus which comprises SecA, SecYEG and auxiliary proteins SecDF-YajC and YidC.

It localises to the cell membrane. It is found in the cytoplasm. It carries out the reaction ATP + H2O + cellular proteinSide 1 = ADP + phosphate + cellular proteinSide 2.. Its function is as follows. Part of the Sec protein translocase complex. Interacts with the SecYEG preprotein conducting channel. Has a central role in coupling the hydrolysis of ATP to the transfer of proteins into and across the cell membrane, serving as an ATP-driven molecular motor driving the stepwise translocation of polypeptide chains across the membrane. This is Protein translocase subunit SecA from Wigglesworthia glossinidia brevipalpis.